Consider the following 200-residue polypeptide: MYEYIKGTLTHINESYVVIESFGIGYAIMLSERFLVDLRAFMHQEVLIYVHSVIRETEHVLYGFSSRAERECFRLLISFSGIGPKTGLSILNMFPLQELCSIARLENVKAIASVPGIGKKTAEKLMVDLKQKLPTLMPLYLEEPVVPSSTANSSFKEGIGALMNLGFSRLAADRMMTEAVKELSEEASVAELLPIALRKS.

A domain I region spans residues 1–65 (MYEYIKGTLT…ETEHVLYGFS (65 aa)). Residues 66 to 144 (SRAERECFRL…TLMPLYLEEP (79 aa)) form a domain II region. A flexible linker region spans residues 145-149 (VVPSS). Positions 150–200 (TANSSFKEGIGALMNLGFSRLAADRMMTEAVKELSEEASVAELLPIALRKS) are domain III.

The protein belongs to the RuvA family. Homotetramer. Forms an RuvA(8)-RuvB(12)-Holliday junction (HJ) complex. HJ DNA is sandwiched between 2 RuvA tetramers; dsDNA enters through RuvA and exits via RuvB. An RuvB hexamer assembles on each DNA strand where it exits the tetramer. Each RuvB hexamer is contacted by two RuvA subunits (via domain III) on 2 adjacent RuvB subunits; this complex drives branch migration. In the full resolvosome a probable DNA-RuvA(4)-RuvB(12)-RuvC(2) complex forms which resolves the HJ.

It localises to the cytoplasm. The RuvA-RuvB-RuvC complex processes Holliday junction (HJ) DNA during genetic recombination and DNA repair, while the RuvA-RuvB complex plays an important role in the rescue of blocked DNA replication forks via replication fork reversal (RFR). RuvA specifically binds to HJ cruciform DNA, conferring on it an open structure. The RuvB hexamer acts as an ATP-dependent pump, pulling dsDNA into and through the RuvAB complex. HJ branch migration allows RuvC to scan DNA until it finds its consensus sequence, where it cleaves and resolves the cruciform DNA. This Chlamydia trachomatis serovar D (strain ATCC VR-885 / DSM 19411 / UW-3/Cx) protein is Holliday junction branch migration complex subunit RuvA.